A 743-amino-acid polypeptide reads, in one-letter code: Homeobox-leucine zipper protein PROTODERMAL FACTOR 2 (743 aa).

The segment at 1–72 (MYHPNMFESH…KKRYHRHTQR (72 aa)) is disordered. Positions 30 to 39 (SREDDFETKS) are enriched in basic and acidic residues. Over residues 60–71 (PNKKKRYHRHTQ) the composition is skewed to basic residues. Positions 62–121 (KKKRYHRHTQRQIQELESFFKECPHPDDKQRKELSRDLNLEPLQVKFWFQNKRTQMKAQS) form a DNA-binding region, homeobox. Positions 110 to 192 (FQNKRTQMKA…DRISAIAAKY (83 aa)) form a coiled coil. Residues 244–476 (SETDKPIIVE…LERQCERLAS (233 aa)) form the START domain.

Belongs to the HD-ZIP homeobox family. Class IV subfamily. As to quaternary structure, interacts with GAI/RGA2, RGA/RGA1/GRS, RGL2/SCL19 and ATML1. Binds to AIL7/PLT7, ANT, BBM and AIL1. In terms of tissue distribution, specifically expressed in the layer 1 (L1) of shoot meristems.

The protein resides in the nucleus. In terms of biological role, probable transcription factor that binds to the L1 box DNA sequence 5'-TAAATG[CT]A-3'. Plays a role in maintaining the identity of L1 cells, possibly by interacting with their L1 box or other target-gene promoters; binds to the LIP1 gene promoter and stimulates its expression upon imbibition. Acts as a positive regulator of gibberellins (GAs)-regulated epidermal gene expression (e.g. LIP1, LIP2, LTP1, FDH and PDF1). Functionally redundant to ATML1. Involved, together with HDG proteins (e.g. HDG1, HDG2, HDG5 and HDG12), in the regulation of flower organs development by promoting the expression of APETALA 3 (AP3) in the epidermis and internal cell layers of developing flowers. Seems to promote cell differentiation. The polypeptide is Homeobox-leucine zipper protein PROTODERMAL FACTOR 2 (Arabidopsis thaliana (Mouse-ear cress)).